Here is a 112-residue protein sequence, read N- to C-terminus: UPF0145 protein LAF_1635 (112 aa).

It belongs to the UPF0145 family.

The polypeptide is UPF0145 protein LAF_1635 (Limosilactobacillus fermentum (strain NBRC 3956 / LMG 18251) (Lactobacillus fermentum)).